The primary structure comprises 452 residues: Tubulin beta-2 chain (452 aa).

8 residues coordinate GTP: Q11, E72, S141, G145, T146, G147, N207, and N229. Position 72 (E72) interacts with Mg(2+). A disordered region spans residues 414–452 (AESNMNDPVAEYQQYQDATADDEEEYDDEAADDHHQYES). A compositionally biased stretch (acidic residues) spans 432–444 (TADDEEEYDDEAA).

The protein belongs to the tubulin family. In terms of assembly, dimer of alpha and beta chains. A typical microtubule is a hollow water-filled tube with an outer diameter of 25 nm and an inner diameter of 15 nM. Alpha-beta heterodimers associate head-to-tail to form protofilaments running lengthwise along the microtubule wall with the beta-tubulin subunit facing the microtubule plus end conferring a structural polarity. Microtubules usually have 13 protofilaments but different protofilament numbers can be found in some organisms and specialized cells. Mg(2+) serves as cofactor.

The protein localises to the cytoplasm. It localises to the cytoskeleton. Tubulin is the major constituent of microtubules, a cylinder consisting of laterally associated linear protofilaments composed of alpha- and beta-tubulin heterodimers. Microtubules grow by the addition of GTP-tubulin dimers to the microtubule end, where a stabilizing cap forms. Below the cap, tubulin dimers are in GDP-bound state, owing to GTPase activity of alpha-tubulin. This is Tubulin beta-2 chain (TUBB2) from Solanum tuberosum (Potato).